We begin with the raw amino-acid sequence, 689 residues long: Glycine--tRNA ligase beta subunit (689 aa).

The protein belongs to the class-II aminoacyl-tRNA synthetase family. Tetramer of two alpha and two beta subunits.

The protein localises to the cytoplasm. It carries out the reaction tRNA(Gly) + glycine + ATP = glycyl-tRNA(Gly) + AMP + diphosphate. This Escherichia coli (strain K12 / MC4100 / BW2952) protein is Glycine--tRNA ligase beta subunit.